The primary structure comprises 412 residues: Peptidase T (412 aa).

Residue His84 participates in Zn(2+) binding. Asp86 is a catalytic residue. Residue Asp146 coordinates Zn(2+). The Proton acceptor role is filled by Glu179. The Zn(2+) site is built by Glu180, Asp202, and His385.

The protein belongs to the peptidase M20B family. Requires Zn(2+) as cofactor.

Its subcellular location is the cytoplasm. The catalysed reaction is Release of the N-terminal residue from a tripeptide.. Functionally, cleaves the N-terminal amino acid of tripeptides. This is Peptidase T from Haemophilus influenzae (strain ATCC 51907 / DSM 11121 / KW20 / Rd).